The sequence spans 430 residues: tRNA(Ile)-lysidine synthase (430 aa).

Position 21–26 (21–26 (SGGLDS)) interacts with ATP.

It belongs to the tRNA(Ile)-lysidine synthase family.

The protein resides in the cytoplasm. It carries out the reaction cytidine(34) in tRNA(Ile2) + L-lysine + ATP = lysidine(34) in tRNA(Ile2) + AMP + diphosphate + H(+). Ligates lysine onto the cytidine present at position 34 of the AUA codon-specific tRNA(Ile) that contains the anticodon CAU, in an ATP-dependent manner. Cytidine is converted to lysidine, thus changing the amino acid specificity of the tRNA from methionine to isoleucine. In Salmonella heidelberg (strain SL476), this protein is tRNA(Ile)-lysidine synthase.